We begin with the raw amino-acid sequence, 428 residues long: Enolase (428 aa).

Gln163 contributes to the (2R)-2-phosphoglycerate binding site. Residue Glu205 is the Proton donor of the active site. Positions 242, 285, and 312 each coordinate Mg(2+). 4 residues coordinate (2R)-2-phosphoglycerate: Lys337, Arg366, Ser367, and Lys388. Lys337 serves as the catalytic Proton acceptor.

This sequence belongs to the enolase family. Requires Mg(2+) as cofactor.

The protein resides in the cytoplasm. It is found in the secreted. Its subcellular location is the cell surface. It carries out the reaction (2R)-2-phosphoglycerate = phosphoenolpyruvate + H2O. It participates in carbohydrate degradation; glycolysis; pyruvate from D-glyceraldehyde 3-phosphate: step 4/5. In terms of biological role, catalyzes the reversible conversion of 2-phosphoglycerate (2-PG) into phosphoenolpyruvate (PEP). It is essential for the degradation of carbohydrates via glycolysis. This Neisseria meningitidis serogroup C / serotype 2a (strain ATCC 700532 / DSM 15464 / FAM18) protein is Enolase.